Consider the following 302-residue polypeptide: N-acetylmuramic acid 6-phosphate etherase (302 aa).

One can recognise an SIS domain in the interval 55 to 218 (AYPKFDQGGR…STGIMVKSGK (164 aa)). E83 acts as the Proton donor in catalysis. E114 is a catalytic residue.

The protein belongs to the GCKR-like family. MurNAc-6-P etherase subfamily. Homodimer.

The enzyme catalyses N-acetyl-D-muramate 6-phosphate + H2O = N-acetyl-D-glucosamine 6-phosphate + (R)-lactate. The protein operates within amino-sugar metabolism; N-acetylmuramate degradation. Specifically catalyzes the cleavage of the D-lactyl ether substituent of MurNAc 6-phosphate, producing GlcNAc 6-phosphate and D-lactate. The polypeptide is N-acetylmuramic acid 6-phosphate etherase (Levilactobacillus brevis (strain ATCC 367 / BCRC 12310 / CIP 105137 / JCM 1170 / LMG 11437 / NCIMB 947 / NCTC 947) (Lactobacillus brevis)).